The sequence spans 98 residues: 10 kDa chaperonin (98 aa).

It belongs to the GroES chaperonin family. Forms stable complexes with CPN60 in the presence of ATP.

It is found in the cytoplasm. Its function is as follows. Seems to function only as a co-chaperone, along with cpn60, and in certain cases is essential for the discharge of biologically active proteins from cpn60. This Brassica napus (Rape) protein is 10 kDa chaperonin.